The chain runs to 314 residues: Probable cell division protein WhiA (314 aa).

Positions T277–Q311 form a DNA-binding region, H-T-H motif.

It belongs to the WhiA family.

Involved in cell division and chromosome segregation. The chain is Probable cell division protein WhiA from Latilactobacillus sakei subsp. sakei (strain 23K) (Lactobacillus sakei subsp. sakei).